Reading from the N-terminus, the 454-residue chain is Protein phosphatase 1F (454 aa).

Positions 1-12 (MSSGAPQKSSPM) are enriched in polar residues. The tract at residues 1–28 (MSSGAPQKSSPMASGAEETPGFLDTLLQ) is disordered. A PPM-type phosphatase domain is found at 156–413 (LVSIHAIRNT…DNITVMVVFL (258 aa)). Mn(2+) is bound by residues aspartate 198, glycine 199, aspartate 360, and aspartate 404. The disordered stretch occupies residues 419 to 454 (LLEGGNQGEGDPQAEGRRQDLPSSLPEPETQAPPRS). A Phosphoserine modification is found at serine 454.

Belongs to the PP2C family. Associates with FEM1B. It depends on Mg(2+) as a cofactor. Mn(2+) is required as a cofactor.

It catalyses the reaction O-phospho-L-seryl-[protein] + H2O = L-seryl-[protein] + phosphate. It carries out the reaction O-phospho-L-threonyl-[protein] + H2O = L-threonyl-[protein] + phosphate. Functionally, dephosphorylates and concomitantly deactivates CaM-kinase II activated upon autophosphorylation, and CaM-kinases IV and I activated upon phosphorylation by CaM-kinase kinase. Promotes apoptosis. This is Protein phosphatase 1F (PPM1F) from Homo sapiens (Human).